Consider the following 103-residue polypeptide: Small ribosomal subunit protein uS10 (103 aa).

Belongs to the universal ribosomal protein uS10 family. Part of the 30S ribosomal subunit.

Involved in the binding of tRNA to the ribosomes. This Dechloromonas aromatica (strain RCB) protein is Small ribosomal subunit protein uS10.